A 337-amino-acid polypeptide reads, in one-letter code: Holliday junction branch migration complex subunit RuvB (337 aa).

The segment at 1-180 is large ATPase domain (RuvB-L); sequence MTRLISADKS…FGVISRLEFY (180 aa). ATP contacts are provided by residues Leu-19, Arg-20, Gly-61, Lys-64, Thr-65, Thr-66, 127–129, Arg-170, Tyr-180, and Arg-217; that span reads EDF. Thr-65 is a Mg(2+) binding site. The interval 181–251 is small ATPAse domain (RuvB-S); the sequence is THEELAFIIT…VADQALALLE (71 aa). The head domain (RuvB-H) stretch occupies residues 254-337; it reads DMGFDMMDRA…APEPPQGKLF (84 aa). Residues Arg-309 and Arg-314 each coordinate DNA.

This sequence belongs to the RuvB family. Homohexamer. Forms an RuvA(8)-RuvB(12)-Holliday junction (HJ) complex. HJ DNA is sandwiched between 2 RuvA tetramers; dsDNA enters through RuvA and exits via RuvB. An RuvB hexamer assembles on each DNA strand where it exits the tetramer. Each RuvB hexamer is contacted by two RuvA subunits (via domain III) on 2 adjacent RuvB subunits; this complex drives branch migration. In the full resolvosome a probable DNA-RuvA(4)-RuvB(12)-RuvC(2) complex forms which resolves the HJ.

It is found in the cytoplasm. It catalyses the reaction ATP + H2O = ADP + phosphate + H(+). Its function is as follows. The RuvA-RuvB-RuvC complex processes Holliday junction (HJ) DNA during genetic recombination and DNA repair, while the RuvA-RuvB complex plays an important role in the rescue of blocked DNA replication forks via replication fork reversal (RFR). RuvA specifically binds to HJ cruciform DNA, conferring on it an open structure. The RuvB hexamer acts as an ATP-dependent pump, pulling dsDNA into and through the RuvAB complex. RuvB forms 2 homohexamers on either side of HJ DNA bound by 1 or 2 RuvA tetramers; 4 subunits per hexamer contact DNA at a time. Coordinated motions by a converter formed by DNA-disengaged RuvB subunits stimulates ATP hydrolysis and nucleotide exchange. Immobilization of the converter enables RuvB to convert the ATP-contained energy into a lever motion, pulling 2 nucleotides of DNA out of the RuvA tetramer per ATP hydrolyzed, thus driving DNA branch migration. The RuvB motors rotate together with the DNA substrate, which together with the progressing nucleotide cycle form the mechanistic basis for DNA recombination by continuous HJ branch migration. Branch migration allows RuvC to scan DNA until it finds its consensus sequence, where it cleaves and resolves cruciform DNA. This is Holliday junction branch migration complex subunit RuvB from Citrifermentans bemidjiense (strain ATCC BAA-1014 / DSM 16622 / JCM 12645 / Bem) (Geobacter bemidjiensis).